We begin with the raw amino-acid sequence, 86 residues long: Translation initiation factor IF-1 2 (86 aa).

In terms of domain architecture, S1-like spans 1–72 (MAKEELLEME…SKGRITFRHI (72 aa)).

The protein belongs to the IF-1 family. In terms of assembly, component of the 30S ribosomal translation pre-initiation complex which assembles on the 30S ribosome in the order IF-2 and IF-3, IF-1 and N-formylmethionyl-tRNA(fMet); mRNA recruitment can occur at any time during PIC assembly.

It localises to the cytoplasm. One of the essential components for the initiation of protein synthesis. Stabilizes the binding of IF-2 and IF-3 on the 30S subunit to which N-formylmethionyl-tRNA(fMet) subsequently binds. Helps modulate mRNA selection, yielding the 30S pre-initiation complex (PIC). Upon addition of the 50S ribosomal subunit IF-1, IF-2 and IF-3 are released leaving the mature 70S translation initiation complex. This Polynucleobacter asymbioticus (strain DSM 18221 / CIP 109841 / QLW-P1DMWA-1) (Polynucleobacter necessarius subsp. asymbioticus) protein is Translation initiation factor IF-1 2.